The primary structure comprises 383 residues: tRNA-specific 2-thiouridylase MnmA (383 aa).

Residues 9-16 (GMSGGVDS) and methionine 35 each bind ATP. Residues 95–97 (NPD) form an interaction with target base in tRNA region. Catalysis depends on cysteine 100, which acts as the Nucleophile. Cysteines 100 and 196 form a disulfide. Position 124 (glycine 124) interacts with ATP. An interaction with tRNA region spans residues 146–148 (KDQ). The Cysteine persulfide intermediate role is filled by cysteine 196. Residues 308-309 (RY) form an interaction with tRNA region.

The protein belongs to the MnmA/TRMU family.

It is found in the cytoplasm. The enzyme catalyses S-sulfanyl-L-cysteinyl-[protein] + uridine(34) in tRNA + AH2 + ATP = 2-thiouridine(34) in tRNA + L-cysteinyl-[protein] + A + AMP + diphosphate + H(+). Functionally, catalyzes the 2-thiolation of uridine at the wobble position (U34) of tRNA, leading to the formation of s(2)U34. The protein is tRNA-specific 2-thiouridylase MnmA of Burkholderia mallei (strain NCTC 10247).